A 122-amino-acid polypeptide reads, in one-letter code: Co-chaperonin GroES (122 aa).

This sequence belongs to the GroES chaperonin family. As to quaternary structure, heptamer of 7 subunits arranged in a ring. Interacts with the chaperonin GroEL.

The protein resides in the cytoplasm. Together with the chaperonin GroEL, plays an essential role in assisting protein folding. The GroEL-GroES system forms a nano-cage that allows encapsulation of the non-native substrate proteins and provides a physical environment optimized to promote and accelerate protein folding. GroES binds to the apical surface of the GroEL ring, thereby capping the opening of the GroEL channel. This is Co-chaperonin GroES from Aquifex aeolicus (strain VF5).